The primary structure comprises 424 residues: Probable serine/threonine-protein kinase PBL6 (424 aa).

Positions methionine 1–proline 26 are disordered. The N-myristoyl glycine moiety is linked to residue glycine 2. A lipid anchor (S-palmitoyl cysteine) is attached at cysteine 3. Phosphothreonine is present on threonine 87. Positions phenylalanine 98–serine 377 constitute a Protein kinase domain. ATP contacts are provided by residues leucine 104 to valine 112 and lysine 127. Tyrosine 172 is subject to Phosphotyrosine. The Proton acceptor role is filled by aspartate 225. 2 positions are modified to phosphoserine: serine 229 and serine 259. Residues threonine 260 and threonine 265 each carry the phosphothreonine modification. The residue at position 273 (tyrosine 273) is a Phosphotyrosine.

This sequence belongs to the protein kinase superfamily. Ser/Thr protein kinase family.

It localises to the cell membrane. It catalyses the reaction L-seryl-[protein] + ATP = O-phospho-L-seryl-[protein] + ADP + H(+). The catalysed reaction is L-threonyl-[protein] + ATP = O-phospho-L-threonyl-[protein] + ADP + H(+). Functionally, may be involved in plant defense signaling. The protein is Probable serine/threonine-protein kinase PBL6 of Arabidopsis thaliana (Mouse-ear cress).